Here is a 392-residue protein sequence, read N- to C-terminus: Cell division protein FtsZ (392 aa).

GTP contacts are provided by residues 24–28, 111–113, E142, R145, and D189; these read GGGCN and GTG.

Belongs to the FtsZ family. Homodimer. Polymerizes to form a dynamic ring structure in a strictly GTP-dependent manner. Interacts directly with several other division proteins.

It localises to the cytoplasm. Functionally, essential cell division protein that forms a contractile ring structure (Z ring) at the future cell division site. The regulation of the ring assembly controls the timing and the location of cell division. One of the functions of the FtsZ ring is to recruit other cell division proteins to the septum to produce a new cell wall between the dividing cells. Binds GTP and shows GTPase activity. The chain is Cell division protein FtsZ from Neisseria gonorrhoeae.